The chain runs to 974 residues: Membrane-associated phosphatidylinositol transfer protein 3 (974 aa).

Phosphoserine occurs at positions 30, 31, 109, 295, 298, 321, 343, and 495. The interval 310–347 (CSLASSKRLSKSNVDVSSGVEDEDPKRPLPRKQSDSST) is disordered. Positions 312–325 (LASSKRLSKSNVDV) are enriched in polar residues. A DDHD domain is found at 390–594 (FDFDVSDFFL…VAFILRQVMR (205 aa)). The disordered stretch occupies residues 497 to 535 (PLLDAPASPPQAPRFQRTERRLSKGSSHSDSSESSDSLA). Low complexity predominate over residues 520-533 (KGSSHSDSSESSDS). S612, S907, S928, and S946 each carry phosphoserine. Positions 927–974 (MSVQQPDPPAANPKPERAQSQPESDKDHERPLPALSWARGPPKFESVP) are disordered.

It belongs to the PtdIns transfer protein family. PI transfer class IIA subfamily. As to quaternary structure, interacts with PTK2B via its C-terminus.

It is found in the endomembrane system. In terms of biological role, catalyzes the transfer of phosphatidylinositol and phosphatidylcholine between membranes (in vitro). Binds calcium ions. This is Membrane-associated phosphatidylinositol transfer protein 3 (Pitpnm3) from Mus musculus (Mouse).